The following is a 317-amino-acid chain: MDRLELIRRNVQEIVTEEELEGLLKNKEAPRAYVGYEPSGKIHMGHVLTVNKLIDLQKAGFKITVLLADVHAYLNKKGTLEEVRKIADYNRRCFIALGLDEEQTDFVYGSDFQLGAEYMLNVLKLSRAVTLNRAKRSMDEVGRAMDDPTVSQMVYPLMQAIDIALLEVDVAVGGIDQRKIHMLARENLKSLGFETPICIHTPILLGLDGTKMASSKDNFISIDDTGEDIYRKFKKAFCKIGDVEENPILALFRYHIFPRYETVVIERPEKFGGDITYHSYAEMESNFIEEKVHPMDLKNAAAKYINEILDPVRKVLL.

Tyr-33 provides a ligand contact to L-tyrosine. The short motif at 38-46 is the 'HIGH' region element; sequence PSGKIHMGH. Residues Tyr-155, Gln-159, Asp-162, and Gln-177 each contribute to the L-tyrosine site. The short motif at 211–215 is the 'KMSKS' region element; it reads KMASS. Position 214 (Ser-214) interacts with ATP.

It belongs to the class-I aminoacyl-tRNA synthetase family. TyrS type 3 subfamily. In terms of assembly, homodimer.

The protein resides in the cytoplasm. The catalysed reaction is tRNA(Tyr) + L-tyrosine + ATP = L-tyrosyl-tRNA(Tyr) + AMP + diphosphate + H(+). Catalyzes the attachment of tyrosine to tRNA(Tyr) in a two-step reaction: tyrosine is first activated by ATP to form Tyr-AMP and then transferred to the acceptor end of tRNA(Tyr). The polypeptide is Tyrosine--tRNA ligase (Methanosarcina acetivorans (strain ATCC 35395 / DSM 2834 / JCM 12185 / C2A)).